Reading from the N-terminus, the 260-residue chain is DNA repair protein RecO (260 aa).

This sequence belongs to the RecO family.

Its function is as follows. Involved in DNA repair and RecF pathway recombination. In Desulfosudis oleivorans (strain DSM 6200 / JCM 39069 / Hxd3) (Desulfococcus oleovorans), this protein is DNA repair protein RecO.